Reading from the N-terminus, the 429-residue chain is Phosphoribosylamine--glycine ligase (429 aa).

In terms of domain architecture, ATP-grasp spans 109-316; sequence KDFLARHKIP…LVELCLAACE (208 aa). An ATP-binding site is contributed by 135-196; the sequence is LREKGAPIVI…EEFLDGEEAS (62 aa). The disordered stretch occupies residues 212-236; the sequence is SQDHKRVGDKDTGPNTGGMGAYSPA. Residues 213–223 show a composition bias toward basic and acidic residues; that stretch reads QDHKRVGDKDT. The Mg(2+) site is built by Glu-286 and Asn-288.

It belongs to the GARS family. Monomer. The cofactor is Mg(2+). Mn(2+) is required as a cofactor.

The catalysed reaction is 5-phospho-beta-D-ribosylamine + glycine + ATP = N(1)-(5-phospho-beta-D-ribosyl)glycinamide + ADP + phosphate + H(+). The protein operates within purine metabolism; IMP biosynthesis via de novo pathway; N(1)-(5-phospho-D-ribosyl)glycinamide from 5-phospho-alpha-D-ribose 1-diphosphate: step 2/2. Its function is as follows. Catalyzes the reversible conversion of phosphoribosylamine to glycinamide ribonucleotide, an enzymatic step in purine biosynthesis pathway. This chain is Phosphoribosylamine--glycine ligase (purD), found in Escherichia coli (strain K12).